Consider the following 262-residue polypeptide: 5'-nucleotidase SurE (262 aa).

Residues D11, D12, S43, and N101 each contribute to the a divalent metal cation site.

The protein belongs to the SurE nucleotidase family. A divalent metal cation is required as a cofactor.

Its subcellular location is the cytoplasm. The enzyme catalyses a ribonucleoside 5'-phosphate + H2O = a ribonucleoside + phosphate. Functionally, nucleotidase that shows phosphatase activity on nucleoside 5'-monophosphates. This is 5'-nucleotidase SurE from Prochlorococcus marinus (strain NATL2A).